The following is a 396-amino-acid chain: Flavohemoprotein (396 aa).

A Globin domain is found at 1 to 136 (MLDAQTIATV…LANVFINREA (136 aa)). H85 lines the heme b pocket. Catalysis depends on charge relay system residues Y95 and E135. The reductase stretch occupies residues 147 to 396 (GGWEGTRDFR…YECFGPHKVL (250 aa)). An FAD-binding FR-type domain is found at 150-255 (EGTRDFRIVA…VAPAGDFFMA (106 aa)). FAD is bound by residues Y188 and 204-207 (RQYS). 268 to 273 (GVGQTP) contributes to the NADP(+) binding site. Residue 389–392 (CFGP) participates in FAD binding.

It belongs to the globin family. Two-domain flavohemoproteins subfamily. This sequence in the C-terminal section; belongs to the flavoprotein pyridine nucleotide cytochrome reductase family. Requires heme b as cofactor. FAD serves as cofactor.

The catalysed reaction is 2 nitric oxide + NADPH + 2 O2 = 2 nitrate + NADP(+) + H(+). It catalyses the reaction 2 nitric oxide + NADH + 2 O2 = 2 nitrate + NAD(+) + H(+). In terms of biological role, is involved in NO detoxification in an aerobic process, termed nitric oxide dioxygenase (NOD) reaction that utilizes O(2) and NAD(P)H to convert NO to nitrate, which protects the bacterium from various noxious nitrogen compounds. Therefore, plays a central role in the inducible response to nitrosative stress. This chain is Flavohemoprotein, found in Shigella flexneri.